The sequence spans 977 residues: Zinc finger CCCH domain-containing protein 7B (977 aa).

3 TPR repeats span residues 1–27, 36–69, and 82–115; these read MERQ…KQEE, VQNL…ADYA, and CKLH…DSES. Ser217 carries the post-translational modification Phosphoserine. The short motif at 248–256 is the LD motif; interaction with NSP3 element; the sequence is STDSLDDFS. Residues Ser364 and Ser367 each carry the phosphoserine modification. The interval 365–403 is disordered; the sequence is FGSTRGSLDKPDSFMEETNSQDHRPPSGAQKPAPSPEPC. 3 C3H1-type zinc fingers span residues 484–508, 616–638, and 754–782; these read LCKD…HQEE, VCRH…HSFI, and PQQY…HSPE. The C2H2-type zinc finger occupies 842–866; it reads YHCWLCGKNSNSKKQWQQHIQSEKH. The C3H1-type 4 zinc-finger motif lies at 886–914; it reads MGEFRLCDRLQKGKACPDGDKCRCAHGQE.

In terms of assembly, (Microbial infection) Interacts (via LD motif) with rotavirus A NSP3 (via the coiled-coil region).

The protein resides in the nucleus. Its function is as follows. May be a specific regulator of miRNA biogenesis. Binds to microRNAs MIR7-1, MIR16-2 and MIR29A hairpins recognizing the 'ATA(A/T)' motif in the apical loop. The chain is Zinc finger CCCH domain-containing protein 7B (ZC3H7B) from Homo sapiens (Human).